The primary structure comprises 186 residues: Large ribosomal subunit protein uL5 (186 aa).

The protein belongs to the universal ribosomal protein uL5 family. In terms of assembly, part of the 50S ribosomal subunit; part of the 5S rRNA/L5/L18/L25 subcomplex. Contacts the 5S rRNA and the P site tRNA. Forms a bridge to the 30S subunit in the 70S ribosome.

In terms of biological role, this is one of the proteins that bind and probably mediate the attachment of the 5S RNA into the large ribosomal subunit, where it forms part of the central protuberance. In the 70S ribosome it contacts protein S13 of the 30S subunit (bridge B1b), connecting the 2 subunits; this bridge is implicated in subunit movement. Contacts the P site tRNA; the 5S rRNA and some of its associated proteins might help stabilize positioning of ribosome-bound tRNAs. The chain is Large ribosomal subunit protein uL5 from Phenylobacterium zucineum (strain HLK1).